The chain runs to 315 residues: Ornithine carbamoyltransferase (315 aa).

Carbamoyl phosphate is bound by residues 53 to 56, Gln80, Arg104, and 131 to 134; these read STRT and HPCQ. L-ornithine is bound by residues Asn163, Asp227, and 231–232; that span reads SM. Carbamoyl phosphate is bound by residues 267-268 and Arg295; that span reads CL.

Belongs to the aspartate/ornithine carbamoyltransferase superfamily. OTCase family.

The protein localises to the cytoplasm. The catalysed reaction is carbamoyl phosphate + L-ornithine = L-citrulline + phosphate + H(+). It functions in the pathway amino-acid biosynthesis; L-arginine biosynthesis; L-arginine from L-ornithine and carbamoyl phosphate: step 1/3. In terms of biological role, reversibly catalyzes the transfer of the carbamoyl group from carbamoyl phosphate (CP) to the N(epsilon) atom of ornithine (ORN) to produce L-citrulline. This chain is Ornithine carbamoyltransferase, found in Rhodococcus jostii (strain RHA1).